We begin with the raw amino-acid sequence, 147 residues long: Succinate dehydrogenase assembly factor 2, mitochondrial (147 aa).

This sequence belongs to the SDHAF2 family. Interacts with the flavoprotein subunit within the SDH catalytic dimer.

It localises to the mitochondrion matrix. Its function is as follows. Plays an essential role in the assembly of succinate dehydrogenase (SDH), an enzyme complex (also referred to as respiratory complex II) that is a component of both the tricarboxylic acid (TCA) cycle and the mitochondrial electron transport chain, and which couples the oxidation of succinate to fumarate with the reduction of ubiquinone (coenzyme Q) to ubiquinol. Required for flavinylation (covalent attachment of FAD) of the flavoprotein subunit of the SDH catalytic dimer. This Drosophila grimshawi (Hawaiian fruit fly) protein is Succinate dehydrogenase assembly factor 2, mitochondrial.